The primary structure comprises 147 residues: Nucleoside diphosphate kinase (147 aa).

Positions 9, 57, 85, 91, 102, and 112 each coordinate ATP. Catalysis depends on H115, which acts as the Pros-phosphohistidine intermediate.

This sequence belongs to the NDK family. Homotetramer. It depends on Mg(2+) as a cofactor.

The protein localises to the cytoplasm. The enzyme catalyses a 2'-deoxyribonucleoside 5'-diphosphate + ATP = a 2'-deoxyribonucleoside 5'-triphosphate + ADP. The catalysed reaction is a ribonucleoside 5'-diphosphate + ATP = a ribonucleoside 5'-triphosphate + ADP. Functionally, major role in the synthesis of nucleoside triphosphates other than ATP. The ATP gamma phosphate is transferred to the NDP beta phosphate via a ping-pong mechanism, using a phosphorylated active-site intermediate. The sequence is that of Nucleoside diphosphate kinase from Listeria monocytogenes serotype 4a (strain HCC23).